We begin with the raw amino-acid sequence, 295 residues long: Ribosomal protein L11 methyltransferase (295 aa).

4 residues coordinate S-adenosyl-L-methionine: Thr-145, Gly-166, Asp-188, and Asn-230.

The protein belongs to the methyltransferase superfamily. PrmA family.

It localises to the cytoplasm. The enzyme catalyses L-lysyl-[protein] + 3 S-adenosyl-L-methionine = N(6),N(6),N(6)-trimethyl-L-lysyl-[protein] + 3 S-adenosyl-L-homocysteine + 3 H(+). Functionally, methylates ribosomal protein L11. The chain is Ribosomal protein L11 methyltransferase from Shewanella amazonensis (strain ATCC BAA-1098 / SB2B).